Consider the following 364-residue polypeptide: Dual-specificity RNA methyltransferase RlmN (364 aa).

Glu-91 serves as the catalytic Proton acceptor. Positions 97-333 (ESDRGTLCIS…VTVRKTRGDD (237 aa)) constitute a Radical SAM core domain. Cys-104 and Cys-338 are oxidised to a cystine. Residues Cys-111, Cys-115, and Cys-118 each coordinate [4Fe-4S] cluster. S-adenosyl-L-methionine is bound by residues 164-165 (GE), Ser-196, 218-220 (SLH), and Asn-295. The S-methylcysteine intermediate role is filled by Cys-338.

It belongs to the radical SAM superfamily. RlmN family. Requires [4Fe-4S] cluster as cofactor.

The protein localises to the cytoplasm. The enzyme catalyses adenosine(2503) in 23S rRNA + 2 reduced [2Fe-2S]-[ferredoxin] + 2 S-adenosyl-L-methionine = 2-methyladenosine(2503) in 23S rRNA + 5'-deoxyadenosine + L-methionine + 2 oxidized [2Fe-2S]-[ferredoxin] + S-adenosyl-L-homocysteine. It carries out the reaction adenosine(37) in tRNA + 2 reduced [2Fe-2S]-[ferredoxin] + 2 S-adenosyl-L-methionine = 2-methyladenosine(37) in tRNA + 5'-deoxyadenosine + L-methionine + 2 oxidized [2Fe-2S]-[ferredoxin] + S-adenosyl-L-homocysteine. Functionally, specifically methylates position 2 of adenine 2503 in 23S rRNA and position 2 of adenine 37 in tRNAs. m2A2503 modification seems to play a crucial role in the proofreading step occurring at the peptidyl transferase center and thus would serve to optimize ribosomal fidelity. This is Dual-specificity RNA methyltransferase RlmN from Neisseria meningitidis serogroup B (strain ATCC BAA-335 / MC58).